The primary structure comprises 208 residues: Ribosome maturation factor RimP (208 aa).

A disordered region spans residues 175 to 208 (GEDVEDLVADPGADDELDELDELDELDDGDEDEQ). A compositionally biased stretch (acidic residues) spans 177-208 (DVEDLVADPGADDELDELDELDELDDGDEDEQ).

The protein belongs to the RimP family.

The protein localises to the cytoplasm. Its function is as follows. Required for maturation of 30S ribosomal subunits. The chain is Ribosome maturation factor RimP from Kineococcus radiotolerans (strain ATCC BAA-149 / DSM 14245 / SRS30216).